An 82-amino-acid chain; its full sequence is Small ribosomal subunit protein uS17 (82 aa).

This sequence belongs to the universal ribosomal protein uS17 family. As to quaternary structure, part of the 30S ribosomal subunit.

In terms of biological role, one of the primary rRNA binding proteins, it binds specifically to the 5'-end of 16S ribosomal RNA. This is Small ribosomal subunit protein uS17 from Phenylobacterium zucineum (strain HLK1).